A 227-amino-acid polypeptide reads, in one-letter code: Albumin-2 (227 aa).

Hemopexin repeat units follow at residues 3 to 46 (PGYI…GPTP), 61 to 111 (SYGI…FPFF), 117 to 165 (ESGI…YPCF), and 171 to 221 (ESGA…WPSL). 2 residues coordinate Ca(2+): Asn7 and Asp65. Ser118 is a binding site for spermine. Positions 121 and 175 each coordinate Ca(2+).

In terms of assembly, monomer and homodimer. Dimers are prevalent in solution.

Its subcellular location is the cytoplasm. It is found in the cytosol. Functionally, may play a role in response to oxidative stress and polyamine biosynthesis. The monomeric form binds one hemin per monomer. In the dimeric form, about half of the dimers bind one molecule of spermine each under physiological conditions. Ligand binding is mutually exclusive as binding of hemin leads to dissociation of the dimer. The chain is Albumin-2 from Lathyrus sativus (White vetchling).